The chain runs to 869 residues: DNA mismatch repair protein MutS (869 aa).

Position 619–626 (glycine 619–serine 626) interacts with ATP.

The protein belongs to the DNA mismatch repair MutS family.

This protein is involved in the repair of mismatches in DNA. It is possible that it carries out the mismatch recognition step. This protein has a weak ATPase activity. The protein is DNA mismatch repair protein MutS of Caldanaerobacter subterraneus subsp. tengcongensis (strain DSM 15242 / JCM 11007 / NBRC 100824 / MB4) (Thermoanaerobacter tengcongensis).